The sequence spans 438 residues: 26S proteasome regulatory subunit 7 homolog (438 aa).

Over residues 1 to 15 (MPPKEDWEKYQKPVD) the composition is skewed to basic and acidic residues. Residues 1-31 (MPPKEDWEKYQKPVDTEEENDKNPPPLDEGD) form a disordered region. A Phosphoserine modification is found at Ser-90. 220–227 (GPPGTGKT) is a binding site for ATP.

The protein belongs to the AAA ATPase family.

The protein localises to the cytoplasm. Its subcellular location is the nucleus. In terms of biological role, the 26S proteasome is involved in the ATP-dependent degradation of ubiquitinated proteins. The regulatory (or ATPase) complex confers ATP dependency and substrate specificity to the 26S complex. The protein is 26S proteasome regulatory subunit 7 homolog (rpt1) of Schizosaccharomyces pombe (strain 972 / ATCC 24843) (Fission yeast).